The primary structure comprises 335 residues: ADP-L-glycero-D-manno-heptose-6-epimerase (335 aa).

NADP(+) is bound by residues 11-12, 32-33, Lys39, 75-79, and Asn92; these read FI, DD, and EGACS. Tyr139 acts as the Proton acceptor in catalysis. Position 143 (Lys143) interacts with NADP(+). Asn172 lines the substrate pocket. NADP(+)-binding residues include Val173 and Lys181. Lys181 serves as the catalytic Proton acceptor. Substrate-binding positions include Arg183, His190, 204–207, Arg217, and Tyr296; that span reads FGDY.

It belongs to the NAD(P)-dependent epimerase/dehydratase family. HldD subfamily. Homopentamer. It depends on NADP(+) as a cofactor.

The enzyme catalyses ADP-D-glycero-beta-D-manno-heptose = ADP-L-glycero-beta-D-manno-heptose. It functions in the pathway nucleotide-sugar biosynthesis; ADP-L-glycero-beta-D-manno-heptose biosynthesis; ADP-L-glycero-beta-D-manno-heptose from D-glycero-beta-D-manno-heptose 7-phosphate: step 4/4. In terms of biological role, catalyzes the interconversion between ADP-D-glycero-beta-D-manno-heptose and ADP-L-glycero-beta-D-manno-heptose via an epimerization at carbon 6 of the heptose. The sequence is that of ADP-L-glycero-D-manno-heptose-6-epimerase from Polaromonas naphthalenivorans (strain CJ2).